We begin with the raw amino-acid sequence, 176 residues long: NAD(P)H-quinone oxidoreductase subunit 6, chloroplastic (176 aa).

Transmembrane regions (helical) follow at residues 10-30, 32-52, 61-81, 90-112, and 152-172; these read ILLVFLGSGLILGGLGVVLFT, PIYSAFSLGLVFVCISLFYIP, AQLLIYVGAVNVLIVFAVMFM, FHLWTVGDGITSLVCTSILFSLI, and FYLPFELTSIILLVALIGAIA.

Belongs to the complex I subunit 6 family. In terms of assembly, NDH is composed of at least 16 different subunits, 5 of which are encoded in the nucleus.

It is found in the plastid. Its subcellular location is the chloroplast thylakoid membrane. It catalyses the reaction a plastoquinone + NADH + (n+1) H(+)(in) = a plastoquinol + NAD(+) + n H(+)(out). The enzyme catalyses a plastoquinone + NADPH + (n+1) H(+)(in) = a plastoquinol + NADP(+) + n H(+)(out). NDH shuttles electrons from NAD(P)H:plastoquinone, via FMN and iron-sulfur (Fe-S) centers, to quinones in the photosynthetic chain and possibly in a chloroplast respiratory chain. The immediate electron acceptor for the enzyme in this species is believed to be plastoquinone. Couples the redox reaction to proton translocation, and thus conserves the redox energy in a proton gradient. The chain is NAD(P)H-quinone oxidoreductase subunit 6, chloroplastic (ndhG) from Ceratophyllum demersum (Rigid hornwort).